A 544-amino-acid polypeptide reads, in one-letter code: Chaperonin GroEL 1 (544 aa).

Residues 29 to 32 (TLGP), 86 to 90 (DGTTT), Gly-413, 479 to 481 (NAA), and Asp-495 contribute to the ATP site.

Belongs to the chaperonin (HSP60) family. Forms a cylinder of 14 subunits composed of two heptameric rings stacked back-to-back. Interacts with the co-chaperonin GroES.

Its subcellular location is the cytoplasm. The catalysed reaction is ATP + H2O + a folded polypeptide = ADP + phosphate + an unfolded polypeptide.. Together with its co-chaperonin GroES, plays an essential role in assisting protein folding. The GroEL-GroES system forms a nano-cage that allows encapsulation of the non-native substrate proteins and provides a physical environment optimized to promote and accelerate protein folding. In Synechococcus sp. (strain CC9902), this protein is Chaperonin GroEL 1.